Here is a 267-residue protein sequence, read N- to C-terminus: Small ribosomal subunit protein uS3 (267 aa).

Positions 43–111 constitute a KH type-2 domain; sequence IRKAMSKDLE…QVQLNIFEVK (69 aa). The interval 216–267 is disordered; it reads FEEQQAQQSNNRQGRRGDRRPRRGQRNAAPQQNAAAEAPAAAEAPAATETKE. Positions 228–240 are enriched in basic residues; that stretch reads QGRRGDRRPRRGQ. Low complexity predominate over residues 241 to 267; the sequence is RNAAPQQNAAAEAPAAAEAPAATETKE.

The protein belongs to the universal ribosomal protein uS3 family. In terms of assembly, part of the 30S ribosomal subunit. Forms a tight complex with proteins S10 and S14.

In terms of biological role, binds the lower part of the 30S subunit head. Binds mRNA in the 70S ribosome, positioning it for translation. The chain is Small ribosomal subunit protein uS3 from Bifidobacterium adolescentis (strain ATCC 15703 / DSM 20083 / NCTC 11814 / E194a).